We begin with the raw amino-acid sequence, 264 residues long: Apolipoprotein A-I (264 aa).

A signal peptide spans 1–18; that stretch reads MRGVLVTLAVLFLTGTQA. Repeat copies occupy residues 67-88 and 89-110. A 10 X approximate tandem repeats region spans residues 67–264; sequence LKLADNLDTL…LLDEVQKTMA (198 aa). A 3; half-length repeat occupies 111–121; the sequence is KDLEEVKEKIR. 5 repeat units span residues 122–143, 144–165, 166–187, 188–209, and 210–231. One copy of the 9; half-length repeat lies at 232–242; the sequence is PLVQEFKERLT. Repeat 10 spans residues 243–264; that stretch reads PYAENLKNRLIDLLDEVQKTMA.

It belongs to the apolipoprotein A1/A4/E family. Major protein of VLDL, HDL, LDL and in chylomicrons. Expressed in a number of tissues including liver, small intestine, lung, kidney, heart and muscle with highest expression in liver and small intestine.

It localises to the secreted. Participates in the reverse transport of cholesterol from tissues to the liver for excretion by promoting cholesterol efflux from tissues and by acting as a cofactor for the lecithin cholesterol acyltransferase (LCAT). This is Apolipoprotein A-I (APOA1) from Coturnix japonica (Japanese quail).